Reading from the N-terminus, the 397-residue chain is Serpin B10 (397 aa).

Positions Lys-74–Lys-77 match the Nuclear localization signal motif.

The protein belongs to the serpin family. Ov-serpin subfamily.

Its subcellular location is the nucleus. The protein resides in the cytoplasm. Protease inhibitor that may play a role in the regulation of protease activities during hematopoiesis and apoptosis induced by TNF. May regulate protease activities in the cytoplasm and in the nucleus. In Mus musculus (Mouse), this protein is Serpin B10 (Serpinb10).